Reading from the N-terminus, the 379-residue chain is UDP-4-amino-4-deoxy-L-arabinose--oxoglutarate aminotransferase (379 aa).

N6-(pyridoxal phosphate)lysine is present on Lys182.

It belongs to the DegT/DnrJ/EryC1 family. ArnB subfamily. In terms of assembly, homodimer. Requires pyridoxal 5'-phosphate as cofactor.

It carries out the reaction UDP-4-amino-4-deoxy-beta-L-arabinose + 2-oxoglutarate = UDP-beta-L-threo-pentopyranos-4-ulose + L-glutamate. The protein operates within nucleotide-sugar biosynthesis; UDP-4-deoxy-4-formamido-beta-L-arabinose biosynthesis; UDP-4-deoxy-4-formamido-beta-L-arabinose from UDP-alpha-D-glucuronate: step 2/3. It functions in the pathway bacterial outer membrane biogenesis; lipopolysaccharide biosynthesis. Catalyzes the conversion of UDP-4-keto-arabinose (UDP-Ara4O) to UDP-4-amino-4-deoxy-L-arabinose (UDP-L-Ara4N). The modified arabinose is attached to lipid A and is required for resistance to polymyxin and cationic antimicrobial peptides. The sequence is that of UDP-4-amino-4-deoxy-L-arabinose--oxoglutarate aminotransferase from Shigella sonnei (strain Ss046).